A 323-amino-acid polypeptide reads, in one-letter code: ADP-L-glycero-D-manno-heptose-6-epimerase (323 aa).

NADP(+)-binding positions include 10–11, 31–32, Lys-38, Lys-53, 75–79, and Asn-92; these read FI, DN, and EGACS. Residue Tyr-139 is the Proton acceptor of the active site. NADP(+) is bound at residue Lys-143. Residue Asn-168 participates in substrate binding. Val-169 and Lys-177 together coordinate NADP(+). Lys-177 functions as the Proton acceptor in the catalytic mechanism. Residues Asp-179, Lys-186, 200–203, Arg-213, and Tyr-277 contribute to the substrate site; that span reads FGAY.

Belongs to the NAD(P)-dependent epimerase/dehydratase family. HldD subfamily. Homopentamer. The cofactor is NADP(+).

It carries out the reaction ADP-D-glycero-beta-D-manno-heptose = ADP-L-glycero-beta-D-manno-heptose. The protein operates within nucleotide-sugar biosynthesis; ADP-L-glycero-beta-D-manno-heptose biosynthesis; ADP-L-glycero-beta-D-manno-heptose from D-glycero-beta-D-manno-heptose 7-phosphate: step 4/4. Catalyzes the interconversion between ADP-D-glycero-beta-D-manno-heptose and ADP-L-glycero-beta-D-manno-heptose via an epimerization at carbon 6 of the heptose. This Hydrogenovibrio crunogenus (strain DSM 25203 / XCL-2) (Thiomicrospira crunogena) protein is ADP-L-glycero-D-manno-heptose-6-epimerase.